A 74-amino-acid chain; its full sequence is Metallothionein-like protein type 2 (74 aa).

This sequence belongs to the metallothionein superfamily. Type 15 family.

Functionally, metallothioneins have a high content of cysteine residues that bind various heavy metals. The polypeptide is Metallothionein-like protein type 2 (Nicotiana plumbaginifolia (Leadwort-leaved tobacco)).